A 323-amino-acid chain; its full sequence is Aldo-keto reductase family 1 member C4 (323 aa).

NADP(+) is bound by residues 20–24 (GFGTY) and Asp-50. Tyr-55 (proton donor) is an active-site residue. His-117 serves as a coordination point for substrate. Residues 166 to 167 (SN), Gln-190, 216 to 221 (HSALGT), and 270 to 280 (KSYNEQRIREN) contribute to the NADP(+) site.

This sequence belongs to the aldo/keto reductase family. As to quaternary structure, monomer.

The protein localises to the cytoplasm. The protein resides in the cytosol. It carries out the reaction chlordecone alcohol + NADP(+) = chlordecone + NADPH + H(+). The catalysed reaction is a 3alpha-hydroxysteroid + NADP(+) = a 3-oxosteroid + NADPH + H(+). The enzyme catalyses a 3alpha-hydroxysteroid + NAD(+) = a 3-oxosteroid + NADH + H(+). It catalyses the reaction 5alpha-androstane-3alpha,17beta-diol + NADP(+) = 17beta-hydroxy-5alpha-androstan-3-one + NADPH + H(+). It carries out the reaction 5alpha-androstane-3beta,17beta-diol + NADP(+) = 17beta-hydroxy-5alpha-androstan-3-one + NADPH + H(+). The catalysed reaction is 5alpha-androstane-3alpha,17beta-diol + NAD(+) = 17beta-hydroxy-5alpha-androstan-3-one + NADH + H(+). The enzyme catalyses 17beta-estradiol + NADP(+) = estrone + NADPH + H(+). It catalyses the reaction 17beta-estradiol + NAD(+) = estrone + NADH + H(+). It carries out the reaction (20S)-hydroxypregn-4-en-3-one + NADP(+) = progesterone + NADPH + H(+). The catalysed reaction is (20S)-hydroxypregn-4-en-3-one + NAD(+) = progesterone + NADH + H(+). The enzyme catalyses androsterone + NADP(+) = 5alpha-androstan-3,17-dione + NADPH + H(+). It catalyses the reaction testosterone + NADP(+) = androst-4-ene-3,17-dione + NADPH + H(+). It carries out the reaction testosterone + NAD(+) = androst-4-ene-3,17-dione + NADH + H(+). The catalysed reaction is 3alpha-hydroxy-5alpha-androstane 17-O-(beta-D-glucuronate) + NADP(+) = 5alpha-dihydrotestosterone 17-O-(beta-D-glucuronate) + NADPH + H(+). The enzyme catalyses (3beta,5alpha,17beta)-3-hydroxy-androstan-17-yl sulfate + NADP(+) = 5alpha-dihydrotestosterone sulfate + NADPH + H(+). It catalyses the reaction 5alpha-androstane-3alpha,17beta-diol + NAD(+) = androsterone + NADH + H(+). It participates in steroid metabolism. In terms of biological role, cytosolic aldo-keto reductase that catalyzes the NADH and NADPH-dependent reduction of ketosteroids to hydroxysteroids. Liver specific enzyme that acts as an NAD(P)(H)-dependent 3-, 17- and 20-ketosteroid reductase on the steroid nucleus and side chain. Displays the ability to catalyze both oxidation and reduction in vitro, but most probably acts as a reductase in vivo since the oxidase activity measured in vitro is inhibited by physiological concentration of NADPH. Acts preferentially as a 3-alpha-hydroxysteroid dehydrogenase (HSD) with a subsidiary 3-beta-HSD activity. Catalyzes efficiently the transformation of the potent androgen 5-alpha-dihydrotestosterone (5alpha-DHT or 17beta-hydroxy-5alpha-androstan-3-one) into the less active form, 5-alpha-androstan-3-alpha,17-beta-diol (3-alpha-diol). Catalyzes the reduction of estrone into 17beta-estradiol but with low efficiency. Metabolizes a broad spectrum of natural and synthetic therapeutic steroid and plays an important role in metabolism of androgens, estrogens, progestereone and conjugated steroids. Catalyzes the biotransformation of the pesticide chlordecone (kepone) to its corresponding alcohol leading to increased biliary excretion of the pesticide and concomitant reduction of its neurotoxicity since bile is the major excretory route. The chain is Aldo-keto reductase family 1 member C4 (AKR1C4) from Macaca fascicularis (Crab-eating macaque).